We begin with the raw amino-acid sequence, 414 residues long: Enterobactin exporter EntS (414 aa).

The Cytoplasmic portion of the chain corresponds to 1-21 (MNRQSWLLNLSLLKTHPAFRA). Residues 22–42 (VFLARFISIVSLGLLGVAVPV) traverse the membrane as a helical segment. At 43-55 (QIQMMTHSTWQVG) the chain is on the periplasmic side. A helical transmembrane segment spans residues 56–76 (LSVTLTGGAMFIGLMVGGVLA). The Cytoplasmic segment spans residues 77-83 (DRYERKK). Residues 84–104 (VILLARGTCGIGFIGLCVNAL) traverse the membrane as a helical segment. Topologically, residues 105 to 109 (LPEPS) are periplasmic. Residues 110–130 (LLAIYLLGLWDGFFASLGVTA) form a helical membrane-spanning segment. Topologically, residues 131 to 156 (LLAATPALVGRENLMQAGAITMLTVR) are cytoplasmic. The chain crosses the membrane as a helical span at residues 157–177 (LGSVISPMLGGILLASGGVAW). N178 is a topological domain (periplasmic). A helical membrane pass occupies residues 179 to 199 (YGLAAAGTFITLLPLLTLPRL). At 200-218 (PVPPQPRENPFIALLAAFR) the chain is on the cytoplasmic side. A helical transmembrane segment spans residues 219 to 239 (FLLASPLIGGIALLGGLVTMA). The Periplasmic portion of the chain corresponds to 240–256 (SAVRVLYPALAMSWQMS). Residues 257-277 (AAQIGLLYAAIPLGAAIGALT) traverse the membrane as a helical segment. Topologically, residues 278–287 (SGQLAHSVRP) are cytoplasmic. A helical membrane pass occupies residues 288 to 307 (GLIMLVSTVGSFLAVGLFAI). Residues 308–313 (MPVWIA) are Periplasmic-facing. Residues 314–336 (GVICLALFGWLSAISSLLQYTLL) traverse the membrane as a helical segment. Residues 337–356 (QTQTPENMLGRMNGLWTAQN) are Cytoplasmic-facing. The chain crosses the membrane as a helical span at residues 357-377 (VTGDAIGAALLGGLGAMMTPV). A topological domain (periplasmic) is located at residue A378. A helical membrane pass occupies residues 379–399 (SASVSGFGLVIIGLLLLLVLG). Residues 400–414 (ELRRFRQTPPVSDAG) are Cytoplasmic-facing.

It belongs to the major facilitator superfamily. EntS (TC 2.A.1.38) family.

It is found in the cell inner membrane. Its function is as follows. Component of an export pathway for enterobactin. This is Enterobactin exporter EntS from Salmonella typhimurium (strain LT2 / SGSC1412 / ATCC 700720).